Here is a 290-residue protein sequence, read N- to C-terminus: Translin-associated protein X (290 aa).

Positions 1-32 are disordered; the sequence is MSNKEGSGGFRKRKHDNFPHNQRREGKDVNSS. Residues 16–28 show a composition bias toward basic and acidic residues; it reads DNFPHNQRREGKD. The interaction with C1D stretch occupies residues 73–208; that stretch reads LLHRITSAPD…MRMCINSVGN (136 aa). Mg(2+)-binding residues include Glu129 and Glu197. Lys279 participates in a covalent cross-link: Glycyl lysine isopeptide (Lys-Gly) (interchain with G-Cter in SUMO2).

It belongs to the translin family. In terms of assembly, ring-shaped heterooctamer of six TSN and two TSNAX subunits. Interacts with GOLGA3, TSNAXIP1, SUN1 and AKAP9. Interacts with the homodimeric form of C1D following gamma-radiation. Interacts with TSN and C1D in a mutually exclusive manner. Post-translationally, sumoylated with SUMO1.

Its subcellular location is the cytoplasm. It localises to the perinuclear region. The protein localises to the golgi apparatus. It is found in the nucleus. Its function is as follows. Acts in combination with TSN as an endonuclease involved in the activation of the RNA-induced silencing complex (RISC). Possible role in spermatogenesis. The polypeptide is Translin-associated protein X (TSNAX) (Pongo abelii (Sumatran orangutan)).